Reading from the N-terminus, the 188-residue chain is Josephin-2 (188 aa).

One can recognise a Josephin domain in the interval 11–188 (PPSVYHERQR…EEAGCWLNTS (178 aa)). Catalysis depends on C24, which acts as the Nucleophile. Residue H125 is the Proton acceptor of the active site.

The protein localises to the cytoplasm. It is found in the cytosol. It catalyses the reaction Thiol-dependent hydrolysis of ester, thioester, amide, peptide and isopeptide bonds formed by the C-terminal Gly of ubiquitin (a 76-residue protein attached to proteins as an intracellular targeting signal).. In terms of biological role, cleaves 'Lys-63'-linked poly-ubiquitin chains, and with lesser efficiency 'Lys-48'-linked poly-ubiquitin chains (in vitro). May act as a deubiquitinating enzyme. This chain is Josephin-2 (Josd2), found in Mus musculus (Mouse).